We begin with the raw amino-acid sequence, 388 residues long: MPGPQGGTGAPSMSLGKLSPVGWVPSSHGKRRLTADMISPPLGDFRHTMHVGRGGDVFGDTSFLSNHGGRSGNTHRSPRSFLARKLQQVRRVGVPPRRMASPAATSPAPPPISPIIKNAISLPQLNQATYDSLVVSKLSFDSTPASSTDGRSGYGLESGFCTISRLPRVEKHSSRDRDHDRDPDHSQDREQSSSPSEPNPNPELRRSDSLLSFRFDLDLGPSLLSELLGVMSLSEAPAANPPAPAANPAPTAKPPADAVTTLDTVTSLPAPTASSPSSGRFPNGVTAVLGPVAEVKASPVGEGPQVPSKMAFDRRGASWGAIRASRHYTEMDARRELAGVLPQVHGSWESLNEEWSAPPASSRAPVPSTVQANAFEFADADEDDEVKV.

The disordered stretch occupies residues 1-28 (MPGPQGGTGAPSMSLGKLSPVGWVPSSH). 2 positions are modified to phosphoserine: Ser19 and Ser27. A Phosphothreonine modification is found at Thr34. The CRIB domain maps to 38–52 (ISPPLGDFRHTMHVG). Ser39 bears the Phosphoserine mark. The residue at position 53 (Arg53) is an Omega-N-methylarginine. 6 positions are modified to phosphoserine: Ser65, Ser77, Ser101, Ser113, Ser121, and Ser139. The disordered stretch occupies residues 165 to 206 (RLPRVEKHSSRDRDHDRDPDHSQDREQSSSPSEPNPNPELRR). Residues 167–191 (PRVEKHSSRDRDHDRDPDHSQDREQ) show a composition bias toward basic and acidic residues. A phosphoserine mark is found at Ser193, Ser207, Ser209, and Ser212. Tandem repeats lie at residues 237 to 243 (PAANPPA) and 250 to 256 (PTAKPPA). Residues 237 to 257 (PAANPPAPAANPAPTAKPPAD) form a disordered region. The 2 X 7 AA tandem repeats of [PT]-[AT]-A-[ENT]-[PT]-[PTS]-[AG] stretch occupies residues 237–270 (PAANPPAPAANPAPTAKPPADAVTTLDTVTSLPA). Pro residues predominate over residues 239–253 (ANPPAPAANPAPTAK). 4 positions are modified to phosphoserine: Ser298, Ser318, Ser347, and Ser350.

The protein belongs to the BORG/CEP family. Interacts with RHOQ and CDC42, in a GTP-dependent manner.

The protein localises to the endomembrane system. It localises to the cytoplasm. The protein resides in the cytoskeleton. Functionally, probably involved in the organization of the actin cytoskeleton. Induced membrane extensions in fibroblasts. This chain is Cdc42 effector protein 1, found in Rattus norvegicus (Rat).